We begin with the raw amino-acid sequence, 215 residues long: MADS-box transcription factor 4 (215 aa).

Positions 1-61 (MGRGKIEIKR…GKLSDYCTPK (61 aa)) constitute an MADS-box domain. The K-box domain occupies 89–175 (HKSLSAEIDR…AFRVHQQEVE (87 aa)).

May interact with the K-box of MADS16. As to expression, highly expressed in lodicules, at intermediate levels in stamens, and weakly in carpels. Expressed in pollen.

The protein localises to the nucleus. In terms of biological role, probable transcription factor involved in the development of floral organs. B-class protein required for normal development of lodicules and stamens (whorls 2 and 3). May function as a heterodimer with MADS16. The chain is MADS-box transcription factor 4 (MADS4) from Oryza sativa subsp. japonica (Rice).